Here is a 214-residue protein sequence, read N- to C-terminus: Probable chemoreceptor glutamine deamidase CheD (214 aa).

The protein belongs to the CheD family.

It catalyses the reaction L-glutaminyl-[protein] + H2O = L-glutamyl-[protein] + NH4(+). Its function is as follows. Probably deamidates glutamine residues to glutamate on methyl-accepting chemotaxis receptors (MCPs), playing an important role in chemotaxis. This is Probable chemoreceptor glutamine deamidase CheD from Vibrio vulnificus (strain YJ016).